Consider the following 255-residue polypeptide: Small ribosomal subunit protein eS4 (255 aa).

The region spanning 43–115 (IPLLILVRDV…PTRFFTLHPI (73 aa)) is the S4 RNA-binding domain.

Belongs to the eukaryotic ribosomal protein eS4 family.

This chain is Small ribosomal subunit protein eS4, found in Hyperthermus butylicus (strain DSM 5456 / JCM 9403 / PLM1-5).